We begin with the raw amino-acid sequence, 65 residues long: MMAKNKMKPKKALAKRIKISSTGKVKFGHAFRSHLAQNKSTKQKRQSKHGTFMHPTDYKRLKDLM.

Residues 30–65 (AFRSHLAQNKSTKQKRQSKHGTFMHPTDYKRLKDLM) are disordered. Positions 56-65 (TDYKRLKDLM) are enriched in basic and acidic residues.

This sequence belongs to the bacterial ribosomal protein bL35 family.

The sequence is that of Large ribosomal subunit protein bL35 from Mycoplasma mobile (strain ATCC 43663 / 163K / NCTC 11711) (Mesomycoplasma mobile).